A 692-amino-acid polypeptide reads, in one-letter code: PTS system glucoside-specific EIICBA component (692 aa).

The PTS EIIC type-1 domain maps to 6 to 430; it reads KKFFGQLQRI…LNLKTPGRED (425 aa). 10 helical membrane passes run 15–35, 84–104, 140–160, 185–205, 215–235, 287–307, 318–338, 344–364, 370–390, and 398–418; these read IGKA…LLTF, LGLA…YLIM, LVLG…IGAL, FVPI…SFVW, LSNF…GIIE, AFTT…AFAI, VVGG…ITEP, LFVA…SFLI, VQIG…GLLS, and LVIP…TFLI. The PTS EIIB type-1 domain occupies 441-522; the sequence is SELPFEVLEA…QQIMDGKITS (82 aa). The active-site Phosphocysteine intermediate; for EIIB activity is the Cys463. The PTS EIIA type-1 domain occupies 563 to 667; that stretch reads DKVFSAKMMG…DTITPIIITN (105 aa). His615 serves as the catalytic Tele-phosphohistidine intermediate; for EIIA activity.

It is found in the cell membrane. With respect to regulation, inhibited by methyl alpha-D-glucoside, methyl beta-D-glucoside, p-nitrophenyl alpha-D-glucoside, o-nitrophenyl beta-D-glucoside and salicin, but not by 2-deoxyglucose. Functionally, the phosphoenolpyruvate-dependent sugar phosphotransferase system (sugar PTS), a major carbohydrate active -transport system, catalyzes the phosphorylation of incoming sugar substrates concomitantly with their translocation across the cell membrane. This system is involved in alpha- and beta-glucoside transport. Can also transport glucose, but not galactose, fructose, mannose, cellobiose, sucrose, maltose, lactose, melibiose and trehalose, as well as N-acetylglucosamine. The protein is PTS system glucoside-specific EIICBA component (glcB) of Staphylococcus carnosus (strain TM300).